Reading from the N-terminus, the 148-residue chain is MAKKNQVARNERERKRVHQVNHGFDVLRNRLQPKNHTKKWSKADTLREAVKYIQQLQVLLNQDPQQPSVSSSTPDYTMNNSNNFNNYAVKEEFSMYLPQNYCPQNQMSVPHGDVSHNFNSPTSSVSSSSYSPTQMCYPPVSYSNYPHH.

3 disordered regions span residues 1 to 21, 63 to 83, and 112 to 132; these read MAKK…HQVN, DPQQ…NSNN, and GDVS…SYSP. Residues 4–17 are basic motif; it reads KNQVARNERERKRV. Residues 4-56 enclose the bHLH domain; it reads KNQVARNERERKRVHQVNHGFDVLRNRLQPKNHTKKWSKADTLREAVKYIQQL. The interval 18-56 is helix-loop-helix motif; it reads HQVNHGFDVLRNRLQPKNHTKKWSKADTLREAVKYIQQL. The span at 63–78 shows a compositional bias: polar residues; it reads DPQQPSVSSSTPDYTM. The span at 120 to 132 shows a compositional bias: low complexity; that stretch reads SPTSSVSSSSYSP.

It is found in the nucleus. Functionally, probable transcription factor, involved in determining neuroblast cell fate, morphogenesis and aspects of terminal differentiation in both left/right symmetric and asymmetric neuronal lineages. This Caenorhabditis elegans protein is Helix-loop-helix protein 14.